The chain runs to 112 residues: MAHFAVGFLTLGLLVPVLTWPVSAPLLVIPVALSASIIRLRTLADERGVTVRTLVGSRAVRWDDIDGLRFHRGSWARATLKDGTELRLPAVTFATLPHLTEASSGRVPNPYR.

Its subcellular location is the secreted. The polypeptide is Low molecular weight protein antigen 6 (cfp6) (Mycobacterium bovis (strain ATCC BAA-935 / AF2122/97)).